Here is a 456-residue protein sequence, read N- to C-terminus: Gamma-glutamyl phosphate reductase (456 aa).

Ser-2 is subject to N-acetylserine.

This sequence belongs to the gamma-glutamyl phosphate reductase family.

It catalyses the reaction L-glutamate 5-semialdehyde + phosphate + NADP(+) = L-glutamyl 5-phosphate + NADPH + H(+). It functions in the pathway amino-acid biosynthesis; L-proline biosynthesis; L-glutamate 5-semialdehyde from L-glutamate: step 2/2. Catalyzes the NADPH dependent reduction of L-gamma-glutamyl 5-phosphate into L-glutamate 5-semialdehyde and phosphate. The product spontaneously undergoes cyclization to form 1-pyrroline-5-carboxylate. In Saccharomyces cerevisiae (strain ATCC 204508 / S288c) (Baker's yeast), this protein is Gamma-glutamyl phosphate reductase (PRO2).